The chain runs to 519 residues: Mannosyl-oligosaccharide alpha-1,2-mannosidase (519 aa).

The N-terminal stretch at 1–22 (MKGSPVLAVCAAALTLIPSVVA) is a signal peptide. A glycan (N-linked (GlcNAc...) asparagine) is linked at asparagine 187. The cysteines at positions 337 and 366 are disulfide-linked. The active-site Proton donor is glutamate 380. An N-linked (GlcNAc...) asparagine glycan is attached at asparagine 443. Threonine 507 lines the Ca(2+) pocket.

Belongs to the glycosyl hydrolase 47 family. Monomer. The cofactor is Ca(2+). Mg(2+) is required as a cofactor.

The protein resides in the secreted. It catalyses the reaction N(4)-(alpha-D-Man-(1-&gt;2)-alpha-D-Man-(1-&gt;2)-alpha-D-Man-(1-&gt;3)-[alpha-D-Man-(1-&gt;2)-alpha-D-Man-(1-&gt;3)-[alpha-D-Man-(1-&gt;2)-alpha-D-Man-(1-&gt;6)]-alpha-D-Man-(1-&gt;6)]-beta-D-Man-(1-&gt;4)-beta-D-GlcNAc-(1-&gt;4)-beta-D-GlcNAc)-L-asparaginyl-[protein] (N-glucan mannose isomer 9A1,2,3B1,2,3) + 4 H2O = N(4)-(alpha-D-Man-(1-&gt;3)-[alpha-D-Man-(1-&gt;3)-[alpha-D-Man-(1-&gt;6)]-alpha-D-Man-(1-&gt;6)]-beta-D-Man-(1-&gt;4)-beta-D-GlcNAc-(1-&gt;4)-beta-D-GlcNAc)-L-asparaginyl-[protein] (N-glucan mannose isomer 5A1,2) + 4 beta-D-mannose. The enzyme catalyses N(4)-(alpha-D-Man-(1-&gt;2)-alpha-D-Man-(1-&gt;2)-alpha-D-Man-(1-&gt;3)-[alpha-D-Man-(1-&gt;3)-[alpha-D-Man-(1-&gt;2)-alpha-D-Man-(1-&gt;6)]-alpha-D-Man-(1-&gt;6)]-beta-D-Man-(1-&gt;4)-beta-D-GlcNAc-(1-&gt;4)-beta-D-GlcNAc)-L-asparaginyl-[protein] (N-glucan mannose isomer 8A1,2,3B1,3) + 3 H2O = N(4)-(alpha-D-Man-(1-&gt;3)-[alpha-D-Man-(1-&gt;3)-[alpha-D-Man-(1-&gt;6)]-alpha-D-Man-(1-&gt;6)]-beta-D-Man-(1-&gt;4)-beta-D-GlcNAc-(1-&gt;4)-beta-D-GlcNAc)-L-asparaginyl-[protein] (N-glucan mannose isomer 5A1,2) + 3 beta-D-mannose. Its pathway is protein modification; protein glycosylation. Functionally, alpha-mannosidase involved in the maturation of Asn-linked oligosaccharides. Progressively trims alpha-1,2-linked mannose residues from Man(9)GlcNAc(2) to produce Man(5)GlcNAc(2). In Coccidioides posadasii (strain RMSCC 757 / Silveira) (Valley fever fungus), this protein is Mannosyl-oligosaccharide alpha-1,2-mannosidase.